The sequence spans 298 residues: MSFFHANQREALNQSLAELQGRINVSFEFFPPRTSDMEETLWSSIDRLSSLKPKFVSVTYGANSGERDRTHSIIKTIKERTGLEAAPHLTCIDASREQLREIAQDYWESGIRHIVALRGDLPQEGGKPDMYAADLVSLLKEVGDFDISVAAYPEVHPEAKSAQADLINLKHKIDAGANRAITQFFFDVESYLRFRDRCVATGIDVEIVPGILPVSNFKQLQKFATMTNVRVPNWMTTMFDGLDNDPETRKMVGASIAMDMVKILSREGVKDFHFYTLNRAELSYAICHTLGVRPDVAR.

The active-site Proton donor/acceptor is Glu-28. NADH is bound at residue Thr-59. Tyr-60, Ala-62, His-88, Arg-118, Gly-119, Asp-120, Ala-132, Tyr-152, His-156, Ala-159, Asp-165, Asn-168, and Lys-172 together coordinate FAD. Asp-120 contacts (6S)-5-methyl-5,6,7,8-tetrahydrofolate. An NADH-binding site is contributed by Gln-183. The (6S)-5-methyl-5,6,7,8-tetrahydrofolate site is built by Gln-183, Gln-219, and Arg-279.

This sequence belongs to the methylenetetrahydrofolate reductase family. FAD is required as a cofactor.

It catalyses the reaction (6S)-5-methyl-5,6,7,8-tetrahydrofolate + NAD(+) = (6R)-5,10-methylene-5,6,7,8-tetrahydrofolate + NADH + H(+). It participates in one-carbon metabolism; tetrahydrofolate interconversion. Its pathway is amino-acid biosynthesis; L-methionine biosynthesis via de novo pathway. Functionally, catalyzes the NADH-dependent reduction of 5,10-methylenetetrahydrofolate to 5-methyltetrahydrofolate. Is required to provide the methyl group necessary for methionine synthetase to convert homocysteine to methionine; the methyl group is given by 5-methyltetrahydrofolate. This chain is 5,10-methylenetetrahydrofolate reductase (metF), found in Pectobacterium carotovorum subsp. carotovorum (Erwinia carotovora subsp. carotovora).